A 70-amino-acid chain; its full sequence is Large ribosomal subunit protein eL43 (70 aa).

C36, C39, C55, and C58 together coordinate Zn(2+). The segment at C36 to C58 adopts a C4-type zinc-finger fold.

This sequence belongs to the eukaryotic ribosomal protein eL43 family. Putative zinc-binding subfamily. As to quaternary structure, part of the 50S ribosomal subunit. Zn(2+) is required as a cofactor.

Functionally, binds to the 23S rRNA. The sequence is that of Large ribosomal subunit protein eL43 from Sulfurisphaera tokodaii (strain DSM 16993 / JCM 10545 / NBRC 100140 / 7) (Sulfolobus tokodaii).